The primary structure comprises 127 residues: Aspartate 1-decarboxylase (127 aa).

The active-site Schiff-base intermediate with substrate; via pyruvic acid is the S25. The residue at position 25 (S25) is a Pyruvic acid (Ser). T57 lines the substrate pocket. Catalysis depends on Y58, which acts as the Proton donor. Substrate is bound at residue G73–A75.

The protein belongs to the PanD family. In terms of assembly, heterooctamer of four alpha and four beta subunits. Pyruvate serves as cofactor. Is synthesized initially as an inactive proenzyme, which is activated by self-cleavage at a specific serine bond to produce a beta-subunit with a hydroxyl group at its C-terminus and an alpha-subunit with a pyruvoyl group at its N-terminus.

The protein localises to the cytoplasm. It catalyses the reaction L-aspartate + H(+) = beta-alanine + CO2. It participates in cofactor biosynthesis; (R)-pantothenate biosynthesis; beta-alanine from L-aspartate: step 1/1. Functionally, catalyzes the pyruvoyl-dependent decarboxylation of aspartate to produce beta-alanine. The protein is Aspartate 1-decarboxylase of Staphylococcus aureus (strain MSSA476).